The chain runs to 294 residues: MTAPAPAALAPARLLDGRRIAEELLDGLKLRVDARLAAGKTRPGLAVVLVGGDPASSVYVRNKRRAAEKVGIEAFDYDLPQGTTEAELAALIDQLNTDPKIHGILIQLPLPGIPDANRLIQRIDPRKDVDGFHPQNVGHLALREFGLRPCTPRGIVTLLAHTDQPVRGRNATIVGVSNHVGRPMGLELLIAGCTVTSCHKFTPPDVLEASVRNADILVVAVGRPGLIPGEWVKPGAVVIDVGINRLDDGRLVGDVGFEAAAQRAGWITPVPGGVGPMTVATLMQNTLEAADAAG.

NADP(+)-binding positions include 175–177 (GVS) and Ile-243.

It belongs to the tetrahydrofolate dehydrogenase/cyclohydrolase family. As to quaternary structure, homodimer.

The enzyme catalyses (6R)-5,10-methylene-5,6,7,8-tetrahydrofolate + NADP(+) = (6R)-5,10-methenyltetrahydrofolate + NADPH. The catalysed reaction is (6R)-5,10-methenyltetrahydrofolate + H2O = (6R)-10-formyltetrahydrofolate + H(+). Its pathway is one-carbon metabolism; tetrahydrofolate interconversion. Its function is as follows. Catalyzes the oxidation of 5,10-methylenetetrahydrofolate to 5,10-methenyltetrahydrofolate and then the hydrolysis of 5,10-methenyltetrahydrofolate to 10-formyltetrahydrofolate. The sequence is that of Bifunctional protein FolD from Xanthomonas campestris pv. campestris (strain 8004).